The following is a 264-amino-acid chain: Thymidylate synthase (264 aa).

Arg-21 lines the dUMP pocket. His-51 contacts (6R)-5,10-methylene-5,6,7,8-tetrahydrofolate. 126-127 (RR) contacts dUMP. The active-site Nucleophile is the Cys-146. Residues 166-169 (RSAD), Asn-177, and 207-209 (HLY) each bind dUMP. Asp-169 lines the (6R)-5,10-methylene-5,6,7,8-tetrahydrofolate pocket. Ala-263 is a (6R)-5,10-methylene-5,6,7,8-tetrahydrofolate binding site.

The protein belongs to the thymidylate synthase family. Bacterial-type ThyA subfamily. As to quaternary structure, homodimer.

Its subcellular location is the cytoplasm. The catalysed reaction is dUMP + (6R)-5,10-methylene-5,6,7,8-tetrahydrofolate = 7,8-dihydrofolate + dTMP. It participates in pyrimidine metabolism; dTTP biosynthesis. In terms of biological role, catalyzes the reductive methylation of 2'-deoxyuridine-5'-monophosphate (dUMP) to 2'-deoxythymidine-5'-monophosphate (dTMP) while utilizing 5,10-methylenetetrahydrofolate (mTHF) as the methyl donor and reductant in the reaction, yielding dihydrofolate (DHF) as a by-product. This enzymatic reaction provides an intracellular de novo source of dTMP, an essential precursor for DNA biosynthesis. The sequence is that of Thymidylate synthase from Nitrosomonas europaea (strain ATCC 19718 / CIP 103999 / KCTC 2705 / NBRC 14298).